Reading from the N-terminus, the 470-residue chain is MSTNEGSLWGGRFADGPADALAALSKSTHFDWVLAPYDIAASKAHARVLFSAGLLTEDQRDGLLAGLDSLASDVADGSFAPLVTDEDVHGALERGLIDRVGAELGGRLRAGRSRNDQVATLFRAWLRDAIRRVADGVLGVVSALATQAAAHPTAIMPGKTHLQSAQPVLLAHHLLAHAHPLLRDVERLADFDKRAAVSPYGAGALAGSSLGLDPDAIAAELGFDSAADNSIDATAARDFAAEAAFVLAMIGVDLSRLAEDIILWSTTEFGYVTLHDAWSTGSSIMPQKKNPDIAELARGKSGRLIGNLTGLLATLKAQPLAYNRDLQEDKEPVFDSVAQLELLLPAVAGLVSTLRFDVDRMAELAPLGYTLATDVAEWLVRRGVPFRVAHEAAGAAVRAAEARGVGLEDLEDAELTGIHPELTGDVREVLTVEGSVNSRDARGGTAPVQVAKQLNVVRDTADRLRLALRR.

The protein belongs to the lyase 1 family. Argininosuccinate lyase subfamily.

It is found in the cytoplasm. The enzyme catalyses 2-(N(omega)-L-arginino)succinate = fumarate + L-arginine. It functions in the pathway amino-acid biosynthesis; L-arginine biosynthesis; L-arginine from L-ornithine and carbamoyl phosphate: step 3/3. The sequence is that of Argininosuccinate lyase from Mycobacterium sp. (strain JLS).